We begin with the raw amino-acid sequence, 288 residues long: MILLCVISRTVLLNIRKRDIRFFTYFEFLLIAALHYGILILFLPVTALLLRTKEQSWYTIFQAVTEPVVLSAYKVTFLTAALAAVINAFLGLILAWILVRYRFPGKNFLDAAVDLPFALPTSVGGLTLMTVYSDKGWMGPICSWLGIKIAFSRLGVLIAMMFVSLPFIVRTIQPVLQSMEEETEEAAWCIGASPWTTFWNVLFPPMISPLLTGTALGFSRAIGEYGSIVLVASNIPMKDLVVSVLIFQRLEQYDYKGATAIASVVLLVSFAILLIINYIYLKRKSLTR.

The next 7 membrane-spanning stretches (helical) occupy residues 28 to 48 (FLLI…VTAL), 77 to 97 (FLTA…LAWI), 111 to 131 (AAVD…LMTV), 149 to 169 (IAFS…PFIV), 198 to 218 (FWNV…ALGF), 227 to 247 (SIVL…VLIF), and 261 to 281 (IASV…YIYL). Residues 73–276 (YKVTFLTAAL…LVSFAILLII (204 aa)) form the ABC transmembrane type-1 domain.

It belongs to the binding-protein-dependent transport system permease family. CysTW subfamily.

Its subcellular location is the plastid. The protein localises to the chloroplast membrane. Part of the ABC transporter complex cysAWTP (TC 3.A.1.6.1) involved in sulfate/thiosulfate import. Probably responsible for the translocation of the substrate across the membrane. The protein is Probable sulfate transport system permease protein cysT (cysT) of Zygnema circumcarinatum (Green alga).